The following is a 148-amino-acid chain: 3-dehydroquinate dehydratase 2 (148 aa).

The Proton acceptor role is filled by Tyr-24. Substrate is bound by residues Asn-75, His-81, and Asp-88. His-101 acts as the Proton donor in catalysis. Substrate is bound by residues 102–103 and Arg-112; that span reads LS.

It belongs to the type-II 3-dehydroquinase family. Homododecamer.

It carries out the reaction 3-dehydroquinate = 3-dehydroshikimate + H2O. Its pathway is metabolic intermediate biosynthesis; chorismate biosynthesis; chorismate from D-erythrose 4-phosphate and phosphoenolpyruvate: step 3/7. Functionally, catalyzes a trans-dehydration via an enolate intermediate. This chain is 3-dehydroquinate dehydratase 2 (aroQ2), found in Pseudomonas aeruginosa (strain ATCC 15692 / DSM 22644 / CIP 104116 / JCM 14847 / LMG 12228 / 1C / PRS 101 / PAO1).